Here is a 313-residue protein sequence, read N- to C-terminus: tRNA uridine(34) hydroxylase (313 aa).

The 95-residue stretch at 124-218 (SDPEVLLIDT…YLEEVPQEET (95 aa)) folds into the Rhodanese domain. C178 acts as the Cysteine persulfide intermediate in catalysis.

The protein belongs to the TrhO family.

The catalysed reaction is uridine(34) in tRNA + AH2 + O2 = 5-hydroxyuridine(34) in tRNA + A + H2O. Its function is as follows. Catalyzes oxygen-dependent 5-hydroxyuridine (ho5U) modification at position 34 in tRNAs. In Pseudomonas fluorescens (strain SBW25), this protein is tRNA uridine(34) hydroxylase.